A 452-amino-acid chain; its full sequence is Phosphoglucosamine mutase (452 aa).

Ser-101 acts as the Phosphoserine intermediate in catalysis. Ser-101, Asp-241, Asp-243, and Asp-245 together coordinate Mg(2+). Phosphoserine is present on Ser-101.

It belongs to the phosphohexose mutase family. Requires Mg(2+) as cofactor. In terms of processing, activated by phosphorylation.

It carries out the reaction alpha-D-glucosamine 1-phosphate = D-glucosamine 6-phosphate. Functionally, catalyzes the conversion of glucosamine-6-phosphate to glucosamine-1-phosphate. This chain is Phosphoglucosamine mutase, found in Lactococcus lactis subsp. cremoris (strain SK11).